A 408-amino-acid chain; its full sequence is G patch domain-containing protein 4 (408 aa).

Met-1 carries the N-acetylmethionine modification. At Thr-4 the chain carries Phosphothreonine. The region spanning 11-57 (GMKFAEEQLLKHGWTQGKGLGRKENGITQALRVTLKQDTYGVGHDPA) is the G-patch domain. Lys-46 is covalently cross-linked (Glycyl lysine isopeptide (Lys-Gly) (interchain with G-Cter in SUMO2)). The residue at position 116 (Thr-116) is a Phosphothreonine. Disordered regions lie at residues 116-141 (TSSG…KPPN) and 187-408 (GQDP…KKRD). Residues Ser-128 and Ser-130 each carry the phosphoserine modification. Composition is skewed to basic and acidic residues over residues 222–236 (RSAE…ESIR), 245–257 (HQEE…REGT), and 274–283 (LKNREHVDRS). Acidic residues predominate over residues 340 to 354 (EEDLNTEDEEVEEAL). The segment covering 358–372 (GTREAESRSCSDQKR) has biased composition (basic and acidic residues). The segment covering 398–408 (KAKKKKQKKRD) has biased composition (basic residues).

The sequence is that of G patch domain-containing protein 4 (GPATCH4) from Bos taurus (Bovine).